The chain runs to 457 residues: ATP synthase subunit beta (457 aa).

147-154 (GGAGVGKT) is a binding site for ATP.

It belongs to the ATPase alpha/beta chains family. F-type ATPases have 2 components, CF(1) - the catalytic core - and CF(0) - the membrane proton channel. CF(1) has five subunits: alpha(3), beta(3), gamma(1), delta(1), epsilon(1). CF(0) has three main subunits: a(1), b(2) and c(9-12). The alpha and beta chains form an alternating ring which encloses part of the gamma chain. CF(1) is attached to CF(0) by a central stalk formed by the gamma and epsilon chains, while a peripheral stalk is formed by the delta and b chains.

The protein resides in the cell inner membrane. The catalysed reaction is ATP + H2O + 4 H(+)(in) = ADP + phosphate + 5 H(+)(out). Its function is as follows. Produces ATP from ADP in the presence of a proton gradient across the membrane. The catalytic sites are hosted primarily by the beta subunits. In Glaesserella parasuis serovar 5 (strain SH0165) (Haemophilus parasuis), this protein is ATP synthase subunit beta.